A 456-amino-acid polypeptide reads, in one-letter code: Dihydroorotase (456 aa).

2 residues coordinate Zn(2+): His60 and His62. Residues 62–64 and Asn94 contribute to the substrate site; that span reads HFR. Residues Glu146, His180, His234, and Asp313 each contribute to the Zn(2+) site. The active site involves Asp313. Residue His317 participates in substrate binding.

The protein belongs to the metallo-dependent hydrolases superfamily. DHOase family. Class I DHOase subfamily. Requires Zn(2+) as cofactor.

The catalysed reaction is (S)-dihydroorotate + H2O = N-carbamoyl-L-aspartate + H(+). It functions in the pathway pyrimidine metabolism; UMP biosynthesis via de novo pathway; (S)-dihydroorotate from bicarbonate: step 3/3. Its function is as follows. Catalyzes the reversible cyclization of carbamoyl aspartate to dihydroorotate. The polypeptide is Dihydroorotase (Methanosarcina mazei (strain ATCC BAA-159 / DSM 3647 / Goe1 / Go1 / JCM 11833 / OCM 88) (Methanosarcina frisia)).